The primary structure comprises 368 residues: Riboflavin biosynthesis protein RibD (368 aa).

The interval 1-146 is deaminase; that stretch reads MISDQTHMRR…EAFCFRIKHQ (146 aa). The 123-residue stretch at 2 to 124 folds into the CMP/dCMP-type deaminase domain; it reads ISDQTHMRRC…RLRQAGIEVK (123 aa). His-51 lines the Zn(2+) pocket. Glu-53 serves as the catalytic Proton donor. Zn(2+) is bound by residues Cys-76 and Cys-85. Residues 147 to 368 are reductase; that stretch reads RPFGIFKYAM…GNDDNGQSNI (222 aa). Residue Ala-155 coordinates NADP(+). Substrate is bound at residue Ser-169. Trp-171 is an NADP(+) binding site. Arg-185 contributes to the substrate binding site. Positions 197 and 201 each coordinate NADP(+). Substrate-binding residues include Leu-205 and Glu-289. An NADP(+)-binding site is contributed by 291–297; sequence GGILAAE.

The protein in the N-terminal section; belongs to the cytidine and deoxycytidylate deaminase family. It in the C-terminal section; belongs to the HTP reductase family. Zn(2+) serves as cofactor.

It carries out the reaction 2,5-diamino-6-hydroxy-4-(5-phosphoribosylamino)-pyrimidine + H2O + H(+) = 5-amino-6-(5-phospho-D-ribosylamino)uracil + NH4(+). The enzyme catalyses 5-amino-6-(5-phospho-D-ribitylamino)uracil + NADP(+) = 5-amino-6-(5-phospho-D-ribosylamino)uracil + NADPH + H(+). The protein operates within cofactor biosynthesis; riboflavin biosynthesis; 5-amino-6-(D-ribitylamino)uracil from GTP: step 2/4. It participates in cofactor biosynthesis; riboflavin biosynthesis; 5-amino-6-(D-ribitylamino)uracil from GTP: step 3/4. In terms of biological role, converts 2,5-diamino-6-(ribosylamino)-4(3h)-pyrimidinone 5'-phosphate into 5-amino-6-(ribosylamino)-2,4(1h,3h)-pyrimidinedione 5'-phosphate. The chain is Riboflavin biosynthesis protein RibD (ribD) from Synechocystis sp. (strain ATCC 27184 / PCC 6803 / Kazusa).